A 1829-amino-acid chain; its full sequence is Protein TIC 214 (1829 aa).

A run of 6 helical transmembrane segments spans residues 18–38 (IINS…FSIG), 67–87 (FIAG…HLAL), 90–110 (PHTI…WNNP), 127–147 (LSIQ…HFLL), 174–194 (FVGW…VLVW), and 224–244 (IFSI…PSPI). The span at 260–272 (RDVEIEKTFERGG) shows a compositional bias: basic and acidic residues. The disordered stretch occupies residues 260 to 301 (RDVEIEKTFERGGTKQGQEVSAEEDPSPSLFSEEKEDPDKIE).

Belongs to the TIC214 family. As to quaternary structure, part of the Tic complex.

The protein resides in the plastid. The protein localises to the chloroplast inner membrane. Involved in protein precursor import into chloroplasts. May be part of an intermediate translocation complex acting as a protein-conducting channel at the inner envelope. The chain is Protein TIC 214 from Citrus sinensis (Sweet orange).